Consider the following 79-residue polypeptide: Conotoxin Cal9.2a (79 aa).

The first 23 residues, 1–23, serve as a signal peptide directing secretion; the sequence is MNCYLILTVALLLTSAMTGTTTA. The propeptide occupies 24 to 33; that stretch reads GQLNKKGVTL. 3 disulfide bridges follow: cysteine 41-cysteine 58, cysteine 46-cysteine 68, and cysteine 48-cysteine 73.

As to expression, expressed by the venom duct.

The protein localises to the secreted. In terms of biological role, probable neurotoxin with unknown target. Possibly targets ion channels. The protein is Conotoxin Cal9.2a of Californiconus californicus (California cone).